The following is a 217-amino-acid chain: Large ribosomal subunit protein uL1 (217 aa).

Residue Y11 is modified to Phosphotyrosine. K91 and K106 each carry N6-acetyllysine. K118 carries the N6-acetyllysine; alternate modification. A Glycyl lysine isopeptide (Lys-Gly) (interchain with G-Cter in SUMO1); alternate cross-link involves residue K118. K118 is covalently cross-linked (Glycyl lysine isopeptide (Lys-Gly) (interchain with G-Cter in SUMO2); alternate). K161 is covalently cross-linked (Glycyl lysine isopeptide (Lys-Gly) (interchain with G-Cter in SUMO2)).

It belongs to the universal ribosomal protein uL1 family. As to quaternary structure, component of the large ribosomal subunit.

Its subcellular location is the cytoplasm. Functionally, component of the large ribosomal subunit. The ribosome is a large ribonucleoprotein complex responsible for the synthesis of proteins in the cell. This chain is Large ribosomal subunit protein uL1 (RPL10A), found in Oryctolagus cuniculus (Rabbit).